Consider the following 338-residue polypeptide: uncharacterized protein (338 aa).

This is an uncharacterized protein from Acidianus filamentous virus 2 (isolate Italy/Pozzuoli) (AFV-2).